A 296-amino-acid chain; its full sequence is Peroxidase P7 (296 aa).

The residue at position 1 (Q1) is a Pyrrolidone carboxylic acid. Intrachain disulfides connect C11-C91, C44-C49, C97-C292, and C176-C201. H42 acts as the Proton acceptor in catalysis. Ca(2+) is bound by residues D43, V46, G48, D50, and S52. Residue P139 coordinates substrate. Heme b is bound at residue H169. Residue T170 coordinates Ca(2+). Residue N185 is glycosylated (N-linked (GlcNAc...) asparagine). Ca(2+) is bound by residues D216, S219, and D224.

The protein belongs to the peroxidase family. Classical plant (class III) peroxidase subfamily. It depends on Ca(2+) as a cofactor. The cofactor is heme b.

The catalysed reaction is 2 a phenolic donor + H2O2 = 2 a phenolic radical donor + 2 H2O. Its function is as follows. Removal of H(2)O(2), oxidation of toxic reductants, biosynthesis and degradation of lignin, suberization, auxin catabolism, response to environmental stresses such as wounding, pathogen attack and oxidative stress. These functions might be dependent on each isozyme/isoform in each plant tissue. The polypeptide is Peroxidase P7 (Brassica rapa subsp. rapa (Turnip)).